Here is a 115-residue protein sequence, read N- to C-terminus: NADH-ubiquinone oxidoreductase chain 3 (115 aa).

The next 3 membrane-spanning stretches (helical) occupy residues 3–23 (LMIT…IAFW), 55–75 (FFLV…LLPL), and 86–106 (LTLL…AYEW).

The protein belongs to the complex I subunit 3 family. In terms of assembly, core subunit of respiratory chain NADH dehydrogenase (Complex I) which is composed of 45 different subunits. Interacts with TMEM186. Interacts with TMEM242.

Its subcellular location is the mitochondrion inner membrane. The catalysed reaction is a ubiquinone + NADH + 5 H(+)(in) = a ubiquinol + NAD(+) + 4 H(+)(out). Functionally, core subunit of the mitochondrial membrane respiratory chain NADH dehydrogenase (Complex I) which catalyzes electron transfer from NADH through the respiratory chain, using ubiquinone as an electron acceptor. Essential for the catalytic activity of complex I. This Loxodonta africana (African elephant) protein is NADH-ubiquinone oxidoreductase chain 3.